The sequence spans 84 residues: Esculentin-1Vb (84 aa).

The N-terminal stretch at 1–22 (MFTLKKPLLLIVLLGIISLSLC) is a signal peptide. Residues 23–36 (EQERNADEDEESET) constitute a propeptide that is removed on maturation. Residues Cys-78 and Cys-84 are joined by a disulfide bond.

Expressed by the skin glands.

It is found in the secreted. Antimicrobial peptide. This is Esculentin-1Vb from Odorrana versabilis (Chinese bamboo leaf odorous frog).